A 460-amino-acid chain; its full sequence is MADLTPVQVLPADIGILNFANIGSDSLAECNRLLDKNHRDHHMFVRDTAGHNHIVHAVLAVLALGGSPQELRDRYDDGASMQRPLPPCDAELLEKLNDPEVFMATLSERAQYTTFLTFFERKMAERGWRSVLQEYLFARTPLADAMLGRLYEGAYHALIHLGYGIEFQSPAIIAEALGQAASHDDSGIAQLFRSAEEEAVFQYPTPRGTPLIELVHEVRANDQIRTAPRWSDYGNKMRDGIVGRACEPMSTLASQFQIFPNEADLERRTAEMIGVCAYMSGAAQRPGRKRKIDFFHMHALNSALFFTVLIRQQWIRLEDRVRMVERKARLDLAWYAVAGSAALDATAITDYSSPESDGLGWDELFAAVNKEHDDGHAAKFIRALKNGEMVSRRYEQGEWAEFFPMKGDMWLKLARMCQDTTKGMPSDLKWIPFTGFEQPWKRADLAEAGETNTAEKVRLY.

It belongs to the questin oxidase family. It depends on NADPH as a cofactor.

It participates in secondary metabolite biosynthesis. Baeyer-Villiger oxidase; part of the gene cluster that mediates the biosynthesis of agnestins, dihydroxy-xanthone metabolites. The pathway begins with the assembly and cyclization of atrochrysone thioester by the non-reducing polyketide synthase Agnpks1. The atrochrysone carboxyl ACP thioesterase AgnL7 then breaks the thioester bond and releases the atrochrysone carboxylic acid as the first enzyme-free intermediate. The decarboxylase AgnL1 then catalyzes the concerted decarboxylation-elimination required to convert atochrysone carboxylic acid into emodin anthrone, which is further oxidized to emodin by the anthrone oxygenase AgnL2. Emodin then undergoes reduction catalyzed by the oxidoreductase AgnL4 to yield the dihydroquinone tautomer which is the substrate for reduction by the short chain dehydrogenase AgnL6 reduction to produce hydroxyketone, followed by AgnL8 dehydration and likely spontaneous autoxidation to chrysophanol. Baeyer-Villiger oxidation by the oxidase AgnL3 leads to monodictyphenone via cleavage of the C-10/C-10a bond of chrysophanol. Alternative cleavage at the C-4a/C-10 bond of chrysophanol also leads to the formation some cephalone F. Further conversion to agnestins A and B, requires reduction to dihydro-monodictyphenone, oxidation to agnestin C probably via an epoxide, and rearrangement to either agnestin A or agnestin B directly, although agnestin A or agnestin B can also interconvert. Within the cluster, AgnR1 is the only unassigned oxidoreductase present which could be involved in this conversion. However, AgnR1 seems not to be involved in this step, and thus genes involved in the proposed oxidation/reduction may be located elsewhere on the genome. Further agnestin A derivatives are probably formed by spontaneous decarboxylations, dehydrations and methanolysis reactions. This is Baeyer-Villiger oxidase AgnL3 from Paecilomyces divaricatus (Penicillium divaricatum).